Reading from the N-terminus, the 114-residue chain is T cell receptor beta variable 5-6 (114 aa).

Positions 1–21 (MGPGLLCWALLCLLGAGLVDA) are cleaved as a signal peptide. Residues 22 to 114 (GVTQSPTHLI…SALYLCASSL (93 aa)) form the Ig-like domain. Residues Cys42 and Cys110 are joined by a disulfide bond. The N-linked (GlcNAc...) asparagine glycan is linked to Asn90.

In terms of assembly, alpha-beta TR is a heterodimer composed of an alpha and beta chain; disulfide-linked. The alpha-beta TR is associated with the transmembrane signaling CD3 coreceptor proteins to form the TR-CD3 (TcR or TCR). The assembly of alpha-beta TR heterodimers with CD3 occurs in the endoplasmic reticulum where a single alpha-beta TR heterodimer associates with one CD3D-CD3E heterodimer, one CD3G-CD3E heterodimer and one CD247 homodimer forming a stable octameric structure. CD3D-CD3E and CD3G-CD3E heterodimers preferentially associate with TR alpha and TR beta chains, respectively. The association of the CD247 homodimer is the last step of TcR assembly in the endoplasmic reticulum and is required for transport to the cell surface.

The protein localises to the cell membrane. Its function is as follows. V region of the variable domain of T cell receptor (TR) beta chain that participates in the antigen recognition. Alpha-beta T cell receptors are antigen specific receptors which are essential to the immune response and are present on the cell surface of T lymphocytes. Recognize peptide-major histocompatibility (MH) (pMH) complexes that are displayed by antigen presenting cells (APC), a prerequisite for efficient T cell adaptive immunity against pathogens. Binding of alpha-beta TR to pMH complex initiates TR-CD3 clustering on the cell surface and intracellular activation of LCK that phosphorylates the ITAM motifs of CD3G, CD3D, CD3E and CD247 enabling the recruitment of ZAP70. In turn ZAP70 phosphorylates LAT, which recruits numerous signaling molecules to form the LAT signalosome. The LAT signalosome propagates signal branching to three major signaling pathways, the calcium, the mitogen-activated protein kinase (MAPK) kinase and the nuclear factor NF-kappa-B (NF-kB) pathways, leading to the mobilization of transcription factors that are critical for gene expression and essential for T cell growth and differentiation. The T cell repertoire is generated in the thymus, by V-(D)-J rearrangement. This repertoire is then shaped by intrathymic selection events to generate a peripheral T cell pool of self-MH restricted, non-autoaggressive T cells. Post-thymic interaction of alpha-beta TR with the pMH complexes shapes TR structural and functional avidity. The chain is T cell receptor beta variable 5-6 from Homo sapiens (Human).